Consider the following 271-residue polypeptide: Tryptophan synthase alpha chain (271 aa).

Catalysis depends on proton acceptor residues glutamate 56 and aspartate 67.

The protein belongs to the TrpA family. In terms of assembly, tetramer of two alpha and two beta chains.

It catalyses the reaction (1S,2R)-1-C-(indol-3-yl)glycerol 3-phosphate + L-serine = D-glyceraldehyde 3-phosphate + L-tryptophan + H2O. Its pathway is amino-acid biosynthesis; L-tryptophan biosynthesis; L-tryptophan from chorismate: step 5/5. The alpha subunit is responsible for the aldol cleavage of indoleglycerol phosphate to indole and glyceraldehyde 3-phosphate. The polypeptide is Tryptophan synthase alpha chain (Mycobacterium intracellulare).